Here is a 248-residue protein sequence, read N- to C-terminus: Aspartate/glutamate leucyltransferase (248 aa).

It belongs to the R-transferase family. Bpt subfamily.

It localises to the cytoplasm. The catalysed reaction is N-terminal L-glutamyl-[protein] + L-leucyl-tRNA(Leu) = N-terminal L-leucyl-L-glutamyl-[protein] + tRNA(Leu) + H(+). It catalyses the reaction N-terminal L-aspartyl-[protein] + L-leucyl-tRNA(Leu) = N-terminal L-leucyl-L-aspartyl-[protein] + tRNA(Leu) + H(+). In terms of biological role, functions in the N-end rule pathway of protein degradation where it conjugates Leu from its aminoacyl-tRNA to the N-termini of proteins containing an N-terminal aspartate or glutamate. In Methylobacterium sp. (strain 4-46), this protein is Aspartate/glutamate leucyltransferase.